The primary structure comprises 280 residues: Putative pyruvate, phosphate dikinase regulatory protein (280 aa).

An ADP-binding site is contributed by 152–159 (GVSRTSKS).

This sequence belongs to the pyruvate, phosphate/water dikinase regulatory protein family. PDRP subfamily.

It catalyses the reaction N(tele)-phospho-L-histidyl/L-threonyl-[pyruvate, phosphate dikinase] + ADP = N(tele)-phospho-L-histidyl/O-phospho-L-threonyl-[pyruvate, phosphate dikinase] + AMP + H(+). The enzyme catalyses N(tele)-phospho-L-histidyl/O-phospho-L-threonyl-[pyruvate, phosphate dikinase] + phosphate + H(+) = N(tele)-phospho-L-histidyl/L-threonyl-[pyruvate, phosphate dikinase] + diphosphate. Its function is as follows. Bifunctional serine/threonine kinase and phosphorylase involved in the regulation of the pyruvate, phosphate dikinase (PPDK) by catalyzing its phosphorylation/dephosphorylation. This chain is Putative pyruvate, phosphate dikinase regulatory protein, found in Anaplasma phagocytophilum (strain HZ).